The chain runs to 200 residues: Probable GTP-binding protein EngB (200 aa).

Positions 26 to 200 constitute an EngB-type G domain; that stretch reads SIPEIAIAGR…IYEIAQCIKK (175 aa). GTP is bound by residues 34-41, 61-65, 80-83, 147-150, and 176-179; these read GRSNVGKS, GCTKQ, DLPG, TKID, and VISA. Mg(2+) contacts are provided by serine 41 and threonine 63.

Belongs to the TRAFAC class TrmE-Era-EngA-EngB-Septin-like GTPase superfamily. EngB GTPase family. The cofactor is Mg(2+).

Necessary for normal cell division and for the maintenance of normal septation. The chain is Probable GTP-binding protein EngB from Ehrlichia canis (strain Jake).